Reading from the N-terminus, the 644-residue chain is Magnetosome protein MamZ (644 aa).

A major facilitator domain region spans residues 1–427 (MPRNAEAPAK…YAAWLLANGI (427 aa)). Helical transmembrane passes span 22 to 42 (WNIIYLLMTVGALMAALSISI), 63 to 83 (ADIQVVAEIVSIVCVGWFGLL), 92 to 112 (IIALGFLIAVVGAAVSLLSLQ), 113 to 133 (VGLAFGAAGLVLFYLTRVLLT), 159 to 179 (LMGNLVFMMVFGGTMLAAIVM), 185 to 205 (PGGVFLIMCLPLLAGIAGFQL), 254 to 274 (VIILSLFFSLWCISVSDLVGV), 281 to 301 (AHAAVMIGLLGLAVLAAVPLW), 311 to 331 (ISAIGASLSLAALGYIWLGMF), 337 to 357 (WLVALPLLMVGIGHAGCFVTL), 369 to 389 (ILGAMVGAGYLVGGLGTVMLV), 403 to 423 (APFILMGTGKMLVTLYAAWLL), 440 to 460 (TVDWKPLVFLTAALPFVWLVG), 478 to 498 (VGFVNRYLGDWAFTFLIISLA), 518 to 538 (IGLFAFFYAVMHVLAYVALEW), 553 to 573 (PFILLGLVAFALLIPLAFTSA), 588 to 608 (LHSATYVINALVALHFILAAN), and 612 to 629 (GEPYVYAAAVIVLLWYRF). The tract at residues 488–599 (WAFTFLIISL…SATYVINALV (112 aa)) is ferric reductase-like domain.

It in the N-terminal section; belongs to the major facilitator superfamily.

Its subcellular location is the magnetosome membrane. In terms of biological role, required for correct biomineralization of the magnetosome; probably converts and then transports some form of iron. It is partially functionally redundant with MamH. May function with MamX, MamY amd Mms6. In Paramagnetospirillum magneticum (strain ATCC 700264 / AMB-1) (Magnetospirillum magneticum), this protein is Magnetosome protein MamZ.